A 280-amino-acid polypeptide reads, in one-letter code: Ribosomal RNA small subunit methyltransferase A (280 aa).

Asparagine 30, valine 32, glycine 57, glutamate 78, aspartate 108, and asparagine 125 together coordinate S-adenosyl-L-methionine.

It belongs to the class I-like SAM-binding methyltransferase superfamily. rRNA adenine N(6)-methyltransferase family. RsmA subfamily.

The protein resides in the cytoplasm. It catalyses the reaction adenosine(1518)/adenosine(1519) in 16S rRNA + 4 S-adenosyl-L-methionine = N(6)-dimethyladenosine(1518)/N(6)-dimethyladenosine(1519) in 16S rRNA + 4 S-adenosyl-L-homocysteine + 4 H(+). Specifically dimethylates two adjacent adenosines (A1518 and A1519) in the loop of a conserved hairpin near the 3'-end of 16S rRNA in the 30S particle. May play a critical role in biogenesis of 30S subunits. In Leifsonia xyli subsp. xyli (strain CTCB07), this protein is Ribosomal RNA small subunit methyltransferase A.